The following is a 587-amino-acid chain: Mitogen-activated protein kinase 4 (587 aa).

One can recognise a Protein kinase domain in the interval 20-312 (FVDFQPLGFG…AEMGLQHPYM (293 aa)). Residues 26 to 34 (LGFGVNGLV) and Lys49 each bind ATP. Residue Asp149 is the Proton acceptor of the active site. Phosphoserine; by PAK1, PAK2 and PAK3 is present on Ser186. An SEG motif motif is present at residues 186 to 188 (SEG). An FRIEDE motif motif is present at residues 328–333 (FRIEDE). Composition is skewed to basic and acidic residues over residues 373 to 383 (QDASEVQRDPR) and 395 to 413 (VDPR…EQSH). Positions 373-413 (QDASEVQRDPRAGSAPLAEDVQVDPRKDSHSSSERFLEQSH) are disordered. Ser434 bears the Phosphoserine mark. Residues 499–534 (STQGGPEHASPPADDPERRLSASPPGRPAPVDGGAS) form a disordered region.

This sequence belongs to the protein kinase superfamily. CMGC Ser/Thr protein kinase family. MAP kinase subfamily. As to quaternary structure, homodimer. Heterodimer with ERK3/MAPK6. Interacts with (via FRIEDE motif) MAPKAPK5. Mg(2+) is required as a cofactor. In terms of processing, phosphorylated at Ser-186 by PAK1, PAK2 and PAK3 resulting in catalytic activation. Phosphorylated by MAPKAPK5 at other sites. As to expression, high expression in heart and brain.

Its subcellular location is the cytoplasm. It localises to the nucleus. It carries out the reaction L-seryl-[protein] + ATP = O-phospho-L-seryl-[protein] + ADP + H(+). The enzyme catalyses L-threonyl-[protein] + ATP = O-phospho-L-threonyl-[protein] + ADP + H(+). Its activity is regulated as follows. Activated by phosphorylation at Ser-186. In terms of biological role, atypical MAPK protein. Phosphorylates microtubule-associated protein 2 (MAP2) and MAPKAPK5. The precise role of the complex formed with MAPKAPK5 is still unclear, but the complex follows a complex set of phosphorylation events: upon interaction with atypical MAPKAPK5, ERK4/MAPK4 is phosphorylated at Ser-186 and then mediates phosphorylation and activation of MAPKAPK5, which in turn phosphorylates ERK4/MAPK4. May promote entry in the cell cycle. The polypeptide is Mitogen-activated protein kinase 4 (MAPK4) (Homo sapiens (Human)).